Reading from the N-terminus, the 407-residue chain is MELLEEDLTCPICCSLFDDPRVLPCSHNFCKKCLEGILEGSVRNSLWRPAPFKCPTCRKETSATGINSLQVNYSLKGIVEKYNKIKISPKMPVCKGHLGQPLNIFCLTDMQLICGICATRGEHTKHVFCSIEDAYAQERDAFESLFQSFETWRRGDALSRLDTLETSKRKSLQLLTKDSDKVKEFFEKLQHTLDQKKNEILSDFETMKLAVMQAYDPEINKLNTILQEQRMAFNIAEAFKDVSEPIVFLQQMQEFREKIKVIKETPLPPSNLPASPLMKNFDTSQWEDIKLVDVDKLSLPQDTGTFISKIPWSFYKLFLLILLLGLVIVFGPTMFLEWSLFDDLATWKGCLSNFSSYLTKTADFIEQSVFYWEQVTDGFFIFNERFKNFTLVVLNNVAEFVCKYKLL.

The RING-type zinc-finger motif lies at 10–58 (CPICCSLFDDPRVLPCSHNFCKKCLEGILEGSVRNSLWRPAPFKCPTCR). The segment at 89-131 (PKMPVCKGHLGQPLNIFCLTDMQLICGICATRGEHTKHVFCSI) adopts a B box-type zinc-finger fold. Zn(2+)-binding residues include cysteine 94, histidine 97, cysteine 117, and histidine 123. Positions 172 to 200 (LQLLTKDSDKVKEFFEKLQHTLDQKKNEI) form a coiled coil. A helical membrane pass occupies residues 317–337 (LFLLILLLGLVIVFGPTMFLE).

This sequence belongs to the TRIM/RBCC family. Interacts (via C-terminal domain) with VCP. Interacts with AKT1; the interaction ubiquitinates AKT1 and leads to its proteasomal degradation. Interacts with MDM2; the interaction ubiquitinates AKT1 and leads to its proteasomal degradation. Interacts with p62/SQSTM1. Interacts with TRAF6. Interacts with IKBKG/NEMO. Auto-ubiquitinated; requires the RING-type zinc finger. Auto-polyubiquitination leads to proteasomal degradation.

Its subcellular location is the endoplasmic reticulum membrane. The enzyme catalyses S-ubiquitinyl-[E2 ubiquitin-conjugating enzyme]-L-cysteine + [acceptor protein]-L-lysine = [E2 ubiquitin-conjugating enzyme]-L-cysteine + N(6)-ubiquitinyl-[acceptor protein]-L-lysine.. The protein operates within protein modification; protein ubiquitination. In terms of biological role, endoplasmic reticulum (ER) membrane anchored E3 ligase involved in the retrotranslocation and turnover of membrane and secretory proteins from the ER through a set of processes named ER-associated degradation (ERAD). This process acts on misfolded proteins as well as in the regulated degradation of correctly folded proteins. Enhances ionizing radiation-induced p53/TP53 stability and apoptosis via ubiquitinating MDM2 and AKT1 and decreasing AKT1 kinase activity through MDM2 and AKT1 proteasomal degradation. Regulates ER stress-induced autophagy, and may act as a tumor suppressor. Also plays a role in innate immune response by stimulating NF-kappa-B activity in the TLR2 signaling pathway. Ubiquitinates TRAF6 via the 'Lys-29'-linked polyubiquitination chain resulting in NF-kappa-B activation. Participates as well in T-cell receptor-mediated NF-kappa-B activation. In the presence of TNF, modulates the IKK complex by regulating IKBKG/NEMO ubiquitination leading to the repression of NF-kappa-B. The polypeptide is E3 ubiquitin-protein ligase TRIM13 (TRIM13) (Homo sapiens (Human)).